A 368-amino-acid polypeptide reads, in one-letter code: F-box only protein 28 (368 aa).

A compositionally biased stretch (basic and acidic residues) spans 1–11; the sequence is MAAASEERMAE. The tract at residues 1–56 is disordered; that stretch reads MAAASEERMAEEGGGGHGDGGSCSAAGSAQRQPPAPPSQAPPPGSQAPAAPALAPD. The segment covering 12–21 has biased composition (gly residues); that stretch reads EGGGGHGDGG. The span at 22-32 shows a compositional bias: low complexity; that stretch reads SCSAAGSAQRQ. Positions 33–45 are enriched in pro residues; sequence PPAPPSQAPPPGS. Residues 46–55 show a composition bias toward low complexity; that stretch reads QAPAAPALAP. The 49-residue stretch at 61 to 109 folds into the F-box domain; sequence NNTLVALPIVAIENILSFMSYDEISQLRLVCKRMDLVCQRMLNQGFLKV. A phosphoserine mark is found at S235 and S242. The residue at position 270 (T270) is a Phosphothreonine. Residues 328 to 368 form a disordered region; that stretch reads MESAVGTSSGSGQSEESPRKRRKATEAIDSLRKSKRLRNRK. S344 is subject to Phosphoserine.

In terms of assembly, part of a SCF (SKP1-cullin-F-box) protein ligase complex.

The protein localises to the chromosome. It localises to the centromere. It is found in the kinetochore. In terms of biological role, probably recognizes and binds to some phosphorylated proteins and promotes their ubiquitination and degradation. The polypeptide is F-box only protein 28 (Fbxo28) (Mus musculus (Mouse)).